Here is a 394-residue protein sequence, read N- to C-terminus: Elongation factor Tu (394 aa).

Residues 10–204 (KPHINVGTIG…ALDKYIPEPQ (195 aa)) form the tr-type G domain. The interval 19 to 26 (GHVDHGKT) is G1. GTP is bound at residue 19-26 (GHVDHGKT). Thr-26 is a Mg(2+) binding site. Residues 60–64 (GITIN) form a G2 region. The G3 stretch occupies residues 81–84 (DCPG). GTP-binding positions include 81-85 (DCPGH) and 136-139 (NKCD). The tract at residues 136 to 139 (NKCD) is G4. Residues 174–176 (SAL) form a G5 region.

It belongs to the TRAFAC class translation factor GTPase superfamily. Classic translation factor GTPase family. EF-Tu/EF-1A subfamily. Monomer.

Its subcellular location is the cytoplasm. The enzyme catalyses GTP + H2O = GDP + phosphate + H(+). In terms of biological role, GTP hydrolase that promotes the GTP-dependent binding of aminoacyl-tRNA to the A-site of ribosomes during protein biosynthesis. The sequence is that of Elongation factor Tu from Hamiltonella defensa subsp. Acyrthosiphon pisum (strain 5AT).